A 548-amino-acid polypeptide reads, in one-letter code: MAKDVKFGIDARKQMMDGVNVLANAVKVTLGPKGRNVVIDKSFGAPAITKDGVSVAKEIELENKFENMGAQLVREVASKTNDVAGDGTTTATVLAQAILVEGMKSVAAGMNPMDLKRGIDKAVAAAVEEIHNISTPADDSKAIAQVGSISANSDTKIGELIAEAMDKVGKKGVITVEEGSGFEDSLEVVEGMQFDRGYISPYFANKQDSLTAEFENPYILLVDKKISNIREIVPLLEQVMQQSKPLLIIAEDVENEALATLVVNNMRGGLKTCAVKAPGFGDRRKAMLQDIAILTGGTVISEEVGMSLETATIEQLGTAKKVTVGKENTVIVDGAGNKADIEARVESINRQIEESTSDYDKEKLQERVAKLSGGVAVIKVGAATETAMKEKKDRVDDALHATRAAVEEGVVPGGGVALVRALNALADLKGDNEDQNAGINILRRAMEAPLRQIVTNAGDEASVVVNEVKNGSGNYGYNAATGVYGDMLEMGILDPAKVSRSALEHAASVAGLMLTTEAMITDKPQSDDPMAGMGGAGMGGMGGMGGMM.

ATP is bound by residues 29–32 (TLGP), K50, 86–90 (DGTTT), G414, 478–480 (NAA), and D494.

Belongs to the chaperonin (HSP60) family. As to quaternary structure, forms a cylinder of 14 subunits composed of two heptameric rings stacked back-to-back. Interacts with the co-chaperonin GroES.

It localises to the cytoplasm. It catalyses the reaction ATP + H2O + a folded polypeptide = ADP + phosphate + an unfolded polypeptide.. Its function is as follows. Together with its co-chaperonin GroES, plays an essential role in assisting protein folding. The GroEL-GroES system forms a nano-cage that allows encapsulation of the non-native substrate proteins and provides a physical environment optimized to promote and accelerate protein folding. This is Chaperonin GroEL from Psychrobacter sp. (strain PRwf-1).